The primary structure comprises 287 residues: Bifunctional protein FolD (287 aa).

NADP(+)-binding positions include G165 to S167, S190, and I231.

Belongs to the tetrahydrofolate dehydrogenase/cyclohydrolase family. Homodimer.

It carries out the reaction (6R)-5,10-methylene-5,6,7,8-tetrahydrofolate + NADP(+) = (6R)-5,10-methenyltetrahydrofolate + NADPH. It catalyses the reaction (6R)-5,10-methenyltetrahydrofolate + H2O = (6R)-10-formyltetrahydrofolate + H(+). Its pathway is one-carbon metabolism; tetrahydrofolate interconversion. Functionally, catalyzes the oxidation of 5,10-methylenetetrahydrofolate to 5,10-methenyltetrahydrofolate and then the hydrolysis of 5,10-methenyltetrahydrofolate to 10-formyltetrahydrofolate. The sequence is that of Bifunctional protein FolD from Trichodesmium erythraeum (strain IMS101).